We begin with the raw amino-acid sequence, 254 residues long: MLKNKKSDNSLSRDTLQIKKRKKTTMAQNGSNTTVKLIGTWASPFAIRAQVALHLKSVEHEYVEETDVLKGKSDLLIKSNPIHKKVPVLIHGDVSICESLNIVQYVDESWPSDLSILPTLPSERAFARFWAHFVDGKLFESIDAVAGAKDDAARMTLAGNLMENLAALEEAFQKSSKGGDFFGGGNIGFVDITVGAIVGPISVIEAFSGVKFLRPDTTPGLIQWAEKFRAHEAVKPYMPTVAEFIEFAKKKFSV.

Positions 19-23 (KKRKK) match the Nuclear localization signal motif. Residues 33 to 114 (TTVKLIGTWA…YVDESWPSDL (82 aa)) enclose the GST N-terminal domain. Residues 43 to 44 (SP), 71 to 72 (GK), 85 to 86 (KV), and 98 to 99 (ES) each bind glutathione. In terms of domain architecture, GST C-terminal spans 120-252 (LPSERAFARF…EFIEFAKKKF (133 aa)).

It belongs to the GST superfamily. Tau family.

The protein resides in the nucleus. The catalysed reaction is RX + glutathione = an S-substituted glutathione + a halide anion + H(+). May be involved in the conjugation of reduced glutathione to a wide number of exogenous and endogenous hydrophobic electrophiles and have a detoxification role against certain herbicides. The chain is Glutathione S-transferase U12 (GSTU12) from Arabidopsis thaliana (Mouse-ear cress).